A 1047-amino-acid chain; its full sequence is Formin-like protein 3 (1047 aa).

A lipid anchor (N-myristoyl glycine) is attached at Gly2. Residues 22-462 enclose the GBD/FH3 domain; the sequence is VPMPDPTELE…AAFQRHNNIE (441 aa). Positions 520-561 are disordered; that stretch reads AVPVEAVAPPPPPPPPPPPPPPAPPLPSEVESIPIPPPPPPP. Positions 527–546 are enriched in pro residues; sequence APPPPPPPPPPPPPPAPPLP. Residues 580–970 enclose the FH2 domain; it reads IKKPIKTKFR…MREKLLAQEA (391 aa). One can recognise a DAD domain in the interval 1000–1037; the sequence is DHRPVYEGKDGTIEDIITVLKSVPFTARTAKRGSRFFC.

This sequence belongs to the formin homology family.

It is found in the cytoplasm. The protein localises to the cell membrane. Its function is as follows. Required for developmental angiogenesis, but not for vasculogenesis. The protein is Formin-like protein 3 (fmnl3) of Danio rerio (Zebrafish).